Consider the following 603-residue polypeptide: MQGTLTSRNTAINNVPSSGVQQSGNNLSGGRFVPNNLPSALSQIPQGNSHGHSGMTSRGGTSVVGNPGYSSNTNGVGGSIPGILPTFAAIGNRSSVPGLGVSPILGNAGPRMTNSVGNIVGGGNIGRSISSGAGLSVPGLASRLNMNANSGSGNLNVQGPNRLMSGVLQQASPQVLSMLGNSYPAGGPLSQNHVQAIGNFNSMGLLNDVNSNDGSPFDINDFPQLSSRPSSAGGPQGQLGSLRKQGLSPIVQQNQEFSIQNEDFPALPGFKGGNADYAMDPHQKEQLHDNTLSMMQQQHFSMGRSAGFNLGGTYSSNRPQQQLQHAPSVSSGGVSFSNINNQDLLSLHGSDVFQSSHSSYQQQGGGPPGIGLRPLNSSGTVSGIGSYDQLIQQYQQHQGQSQFRLQQMSTLGQPFRDQSLKSMQSQVAPDPFGMLGLLSVIRMSDPDLTSLALGIDLTTLGLNLNSAENLYKTFGSPWSDEPAKGDPEFTVPQCYYAKQPPPLNQAYFSKFQLDTLFYIFYSMPKDEAQLYAANELYNRGWFYHREHRLWFMRVANMEPLVKTNAYERGSYICFDPNTWETIHKDNFVLHCEMLEKRPVLPQH.

Composition is skewed to polar residues over residues M1–S28 and N36–S70. 4 disordered regions span residues M1–S70, N212–L242, A306–S335, and S355–S377. Residues G312–S335 show a composition bias toward polar residues.

Belongs to the CNOT2/3/5 family. In terms of assembly, binds to VIP1. Interacts with Agrobacterium tumefaciens VirE2. Forms a complex made of Agrobacterium VirE2, VIP1, VIP2 and single-stranded DNA (ssDNA).

The protein localises to the nucleus. Transcriptional regulator required for Agrobacterium-mediated stable genetic transformation by T-DNA integration in host genome, but not for T-DNA transient expression. This is Probable NOT transcription complex subunit VIP2 (VIP2) from Nicotiana benthamiana.